The following is a 264-amino-acid chain: Ribosome-recycling factor, mitochondrial (264 aa).

The protein belongs to the RRF family.

Its subcellular location is the mitochondrion. In terms of biological role, necessary for protein synthesis in mitochondria. Functions as a ribosome recycling factor in mitochondria. The protein is Ribosome-recycling factor, mitochondrial (RRF1) of Yarrowia lipolytica (strain CLIB 122 / E 150) (Yeast).